The following is a 767-amino-acid chain: Photosystem I P700 chlorophyll a apoprotein A1 (767 aa).

A disordered region spans residues 1 to 22; the sequence is MTISPPESGEKNKKVLEDPVKA. The segment covering 8 to 22 has biased composition (basic and acidic residues); the sequence is SGEKNKKVLEDPVKA. Helical transmembrane passes span 76 to 99, 162 to 185, 201 to 225, 309 to 327, 368 to 391, 407 to 433, 455 to 477, and 558 to 576; these read IFSAHFGHLAIIFIWMSAAFFHGA, LMALAIGAVIMAALMLHGGIYHYH, LNHHIAGLVGLGSLAWAGHCIHIGA, IAHHHLAFGVIAIIGGHLY, RHAQLSVNLACLGSLSILISHHMY, LGLFTHHMWIGALFIVGAGAHAGIAMV, ALISHLNWVCMWLGFHSFGLYIH, and LMIHHIHAFQIHVTVLILL. [4Fe-4S] cluster-binding residues include C600 and C609. 2 helical membrane-spanning segments follow: residues 616-637 and 681-703; these read HVFLALFWMYNCISIVIFHFSW and ISMYGLMFLGAHFIWAFSLMFLF. H692 is a binding site for divinylchlorophyll a'. The divinyl chlorophyll a site is built by M700 and Y708. W709 provides a ligand contact to phylloquinone. Residues 741-761 traverse the membrane as a helical segment; the sequence is AVGVAHFLLGGIATTWAFFHA.

It belongs to the PsaA/PsaB family. The PsaA/B heterodimer binds the P700 divinyl chlorophyll special pair and subsequent electron acceptors. PSI consists of a core antenna complex that captures photons, and an electron transfer chain that converts photonic excitation into a charge separation. The cyanobacterial PSI reaction center is composed of one copy each of PsaA,B,C,D,E,F,I,J,K,L,M and X, and forms trimeric complexes. It depends on PSI electron transfer chain: 5 divinyl chlorophyll a, 1 divinyl chlorophyll a', 2 phylloquinones and 3 4Fe-4S clusters. PSI core antenna: 90 divinyl chlorophyll a, 22 carotenoids, 3 phospholipids and 1 galactolipid. P700 is a divinyl chlorophyll a/divinyl chlorophyll a' dimer, A0 is one or more divinyl chlorophyll a, A1 is one or both phylloquinones and FX is a shared 4Fe-4S iron-sulfur center. as a cofactor.

The protein localises to the cellular thylakoid membrane. The catalysed reaction is reduced [plastocyanin] + hnu + oxidized [2Fe-2S]-[ferredoxin] = oxidized [plastocyanin] + reduced [2Fe-2S]-[ferredoxin]. PsaA and PsaB bind P700, the primary electron donor of photosystem I (PSI), as well as the electron acceptors A0, A1 and FX. PSI is a plastocyanin/cytochrome c6-ferredoxin oxidoreductase, converting photonic excitation into a charge separation, which transfers an electron from the donor P700 chlorophyll pair to the spectroscopically characterized acceptors A0, A1, FX, FA and FB in turn. Oxidized P700 is reduced on the lumenal side of the thylakoid membrane by plastocyanin or cytochrome c6. The protein is Photosystem I P700 chlorophyll a apoprotein A1 of Prochlorococcus marinus (strain MIT 9312).